The primary structure comprises 177 residues: MKICRICGYQIPEGEFNLLEDGWVCPRCGVGKEELQDSAEPLGGRDPLMLIFRAMTVGLWRVLGNGSQGVTREMGSVIADNIRHGDDPLKSAADYFIEHGFAASISTDTENFALNVKNCSFYGFCCSLEEDGVLLSTCPYANTAAAVLERTTGYRYRIKRNKGDHGHIIEFSRISKK.

The 38-residue stretch at methionine 1 to serine 38 folds into the Rubredoxin-like domain. The Fe cation site is built by cysteine 4, cysteine 7, cysteine 25, and cysteine 28.

This sequence belongs to the rubredoxin family. Fe(3+) is required as a cofactor.

The chain is Putative rubredoxin (rdxA) from Methanothermobacter thermautotrophicus (strain ATCC 29096 / DSM 1053 / JCM 10044 / NBRC 100330 / Delta H) (Methanobacterium thermoautotrophicum).